Consider the following 205-residue polypeptide: N-(5'-phosphoribosyl)anthranilate isomerase (205 aa).

It belongs to the TrpF family.

The enzyme catalyses N-(5-phospho-beta-D-ribosyl)anthranilate = 1-(2-carboxyphenylamino)-1-deoxy-D-ribulose 5-phosphate. Its pathway is amino-acid biosynthesis; L-tryptophan biosynthesis; L-tryptophan from chorismate: step 3/5. The protein is N-(5'-phosphoribosyl)anthranilate isomerase of Thiobacillus denitrificans (strain ATCC 25259 / T1).